The chain runs to 161 residues: Ribonuclease P protein component 2 (161 aa).

The protein belongs to the eukaryotic/archaeal RNase P protein component 2 family. In terms of assembly, consists of a catalytic RNA component and at least 4-5 protein subunits.

Its subcellular location is the cytoplasm. The enzyme catalyses Endonucleolytic cleavage of RNA, removing 5'-extranucleotides from tRNA precursor.. Part of ribonuclease P, a protein complex that generates mature tRNA molecules by cleaving their 5'-ends. In Haloarcula marismortui (strain ATCC 43049 / DSM 3752 / JCM 8966 / VKM B-1809) (Halobacterium marismortui), this protein is Ribonuclease P protein component 2.